The primary structure comprises 241 residues: Adapter protein MecA (241 aa).

A disordered region spans residues 77–102; sequence KNTDEDDVADESQGDASVDSEHPDQV. Positions 80–89 are enriched in acidic residues; sequence DEDDVADESQ.

It belongs to the MecA family. In terms of assembly, homodimer.

In terms of biological role, enables the recognition and targeting of unfolded and aggregated proteins to the ClpC protease or to other proteins involved in proteolysis. The chain is Adapter protein MecA from Levilactobacillus brevis (strain ATCC 367 / BCRC 12310 / CIP 105137 / JCM 1170 / LMG 11437 / NCIMB 947 / NCTC 947) (Lactobacillus brevis).